Reading from the N-terminus, the 204-residue chain is LexA repressor (204 aa).

The segment at residues 28 to 48 is a DNA-binding region (H-T-H motif); sequence VREIGQAVGLASSSTVHGHLS. Residues serine 126 and lysine 164 each act as for autocatalytic cleavage activity in the active site.

This sequence belongs to the peptidase S24 family. In terms of assembly, homodimer.

The catalysed reaction is Hydrolysis of Ala-|-Gly bond in repressor LexA.. Its function is as follows. Represses a number of genes involved in the response to DNA damage (SOS response), including recA and lexA. In the presence of single-stranded DNA, RecA interacts with LexA causing an autocatalytic cleavage which disrupts the DNA-binding part of LexA, leading to derepression of the SOS regulon and eventually DNA repair. The protein is LexA repressor of Bacillus mycoides (strain KBAB4) (Bacillus weihenstephanensis).